A 127-amino-acid polypeptide reads, in one-letter code: Large ribosomal subunit protein uL18 (127 aa).

This sequence belongs to the universal ribosomal protein uL18 family. Part of the 50S ribosomal subunit; part of the 5S rRNA/L5/L18/L25 subcomplex. Contacts the 5S and 23S rRNAs.

Its function is as follows. This is one of the proteins that bind and probably mediate the attachment of the 5S RNA into the large ribosomal subunit, where it forms part of the central protuberance. The polypeptide is Large ribosomal subunit protein uL18 (Streptomyces griseus subsp. griseus (strain JCM 4626 / CBS 651.72 / NBRC 13350 / KCC S-0626 / ISP 5235)).